Reading from the N-terminus, the 143-residue chain is Host transcription reprogramming factor 8 (143 aa).

Positions 1 to 19 (MHTYKFIQIALLFASVALA) are cleaved as a signal peptide. The segment covering 24–34 (PSPPNPPPVPQ) has biased composition (pro residues). The disordered stretch occupies residues 24–43 (PSPPNPPPVPQLPNSETKSN). Residues 48–71 (HSCEFCGVVKPSGPAYLEHYHQNH) form a C2H2-type 1 zinc finger. Residues 77 to 99 (GKLATPSPPNPPPVPTQKVETHA) are disordered. Pro residues predominate over residues 82–91 (PSPPNPPPVP). The C2H2-type 2 zinc finger occupies 103–126 (HGCEWCNKVEPSGPAYIKHYKENH).

The protein localises to the secreted. It localises to the host nucleus. In terms of biological role, probable secreted effector that translocates into the nuclei of host cells to reprogram the expression of targeted genes by binding on effector binding elements in rice. In Pyricularia oryzae (strain 70-15 / ATCC MYA-4617 / FGSC 8958) (Rice blast fungus), this protein is Host transcription reprogramming factor 8.